The following is a 1383-amino-acid chain: MTSYSFTEKKRIRKDFGKQRSILEVPFLLAIQVDSYREFLQEDVESTKRKDLGLHAALKSVFPISSYSGNAALEYVGYKLGQPVFDERECRQRGMSYGAPLRVTVRLVIYDRESSTKAIKYVKEQEVYLGEIPLMTGNGTFIVNGTERVIVSQLHRSPGVFFDHDRGKTHSSGKLLYSARIIPYRGSWLDFEFDPKDALFTRIDRRRKLPVSILLRALGYNNEEMLAEFFEINTFHINPDEGVQLELVPERLRGETLNFDLADGDKVIVEAGKRITARHVKQLEAAGVAALAVPDDYLVGRILSHDVVDGSTGELLANANDEISEDQLTAFRKAGVDAVGTLWVNDLDRGPYLSNTLRIDPTKTQLEALVEIYRMMRPGEPPTKEAAQNLFHNLFFTFERYDLSTVGRMKFNRRVGRKDVLGESVLYDKKYFAERNDEESKRLVAEHTDTSDILEVIKVLTEIRNGRGVVDDIDHLGNRRVRSVGEMAENVFRVGLVRVERAVKERLSMAESEGLTPQELINAKPVAAAIKEFFGSSQLSQFMDQNNPLSEVTHKRRVSALGPGGLTRERAGFEVRDVHPTHYGRVCTIETPEGPNIGLINSLAVFARTNQYGFLETPYRKVLDGKVSDDVEYLSAIEENEYVIAQANALTDAKNMLTEQFVPCRFQGESLLKPPSEVHFMDVSPMQTVSVAAALVPFLEHDDANRALMGANMQRQAVPTLRSQKPLVGTGIERAVARDSGVTVNALRGGVIEQIDAARIVVKVNEAEIGGGTDAGVDIYNLIKYTRSNQNTCINQRPLVNVGDVIARGDVLADGPSTDIGELALGQNMLIAFMPWNGYNFEDSILLSERVVEEDRYTTIHIEELTCVARDTKLGPEEISADIPNVSEQALNRLDESGVVYIGAEVRAGDIMVGKVTPKGESQLTPEEKLLRAIFGEKASDVKDSSLRVPPGMDGTVIDVQVFTRDGIEKDKRARQIEENEIKRVKKDFDDQFRILEAAIYARLRSQIVGKVANGGANLKKGDSVTDAYLDGLKKSDWFQLRMKDEDAADAIERAQKQIQAHEKEFEARFADKRGKITQGDDLAPGVLKMVKVFLAVKRRIQPGDKMAGRHGNKGVVSNVVPVEDMPYMATGESVDIVLNPLGVPSRMNIGQILEVHLGWAAKGLGRKIQRMLEAQAAVSELRKFLDDIYNHDNAINAQRVDLSQFSDEELLNLGKNLIDGVPMATPVFDGASEAEIKRMLELADLPQSGQTQLYDGRTGEAFDRKTTVGYMHYLKLNHLVDDKMHARSTGPYSLVTQQPLGGKAQFGGQRFGEMEVWALEAYGAAYTLQEMLTVKSDDVQGRNQMYKNIVDGEHEMVAGMPESFNVLVKEIRSLAIHMELEE.

The protein belongs to the RNA polymerase beta chain family. In terms of assembly, the RNAP catalytic core consists of 2 alpha, 1 beta, 1 beta' and 1 omega subunit. When a sigma factor is associated with the core the holoenzyme is formed, which can initiate transcription.

The catalysed reaction is RNA(n) + a ribonucleoside 5'-triphosphate = RNA(n+1) + diphosphate. Functionally, DNA-dependent RNA polymerase catalyzes the transcription of DNA into RNA using the four ribonucleoside triphosphates as substrates. The protein is DNA-directed RNA polymerase subunit beta of Xanthomonas oryzae pv. oryzae (strain MAFF 311018).